The chain runs to 331 residues: Meiotic recombination protein P22 (331 aa).

Residues 132 to 187 (NNIQKEVHQRNSQRRSIQCTPKKRGRKPKQPAKKLQSRISTDQLGSTPSPSKLPAK) form a disordered region. The span at 152 to 167 (PKKRGRKPKQPAKKLQ) shows a compositional bias: basic residues. The span at 168-181 (SRISTDQLGSTPSP) shows a compositional bias: polar residues.

The protein belongs to the TOP6B-like family.

The protein localises to the chromosome. In terms of biological role, required for formation of the mei-W68-mediated double-strand breaks (DSBs) that initiate meiotic recombination. This Drosophila melanogaster (Fruit fly) protein is Meiotic recombination protein P22.